The following is a 278-amino-acid chain: Large ribosomal subunit protein uL24m (278 aa).

One can recognise a KOW domain in the interval F109 to D142.

This sequence belongs to the universal ribosomal protein uL24 family.

It localises to the mitochondrion. This Caenorhabditis briggsae protein is Large ribosomal subunit protein uL24m (mrpl-24).